The primary structure comprises 493 residues: Glutamyl-tRNA(Gln) amidotransferase subunit A (493 aa).

Catalysis depends on charge relay system residues lysine 78 and serine 158. The active-site Acyl-ester intermediate is the serine 182.

The protein belongs to the amidase family. GatA subfamily. In terms of assembly, heterotrimer of A, B and C subunits.

It carries out the reaction L-glutamyl-tRNA(Gln) + L-glutamine + ATP + H2O = L-glutaminyl-tRNA(Gln) + L-glutamate + ADP + phosphate + H(+). Its function is as follows. Allows the formation of correctly charged Gln-tRNA(Gln) through the transamidation of misacylated Glu-tRNA(Gln) in organisms which lack glutaminyl-tRNA synthetase. The reaction takes place in the presence of glutamine and ATP through an activated gamma-phospho-Glu-tRNA(Gln). The polypeptide is Glutamyl-tRNA(Gln) amidotransferase subunit A (Rickettsia rickettsii (strain Iowa)).